A 623-amino-acid polypeptide reads, in one-letter code: Glutamine--fructose-6-phosphate aminotransferase [isomerizing] (623 aa).

The Nucleophile; for GATase activity role is filled by Cys-2. The Glutamine amidotransferase type-2 domain maps to 2-228 (CGIVGYIGQA…NDQVVTITAD (227 aa)). 2 SIS domains span residues 295-435 (IDES…LRGN) and 468-613 (LGRS…VDQP). Residue Lys-618 is the For Fru-6P isomerization activity of the active site.

As to quaternary structure, homodimer.

Its subcellular location is the cytoplasm. It carries out the reaction D-fructose 6-phosphate + L-glutamine = D-glucosamine 6-phosphate + L-glutamate. Functionally, catalyzes the first step in hexosamine metabolism, converting fructose-6P into glucosamine-6P using glutamine as a nitrogen source. This is Glutamine--fructose-6-phosphate aminotransferase [isomerizing] from Corynebacterium efficiens (strain DSM 44549 / YS-314 / AJ 12310 / JCM 11189 / NBRC 100395).